The following is a 255-amino-acid chain: Octanoyltransferase (255 aa).

The 185-residue stretch at 54 to 238 folds into the BPL/LPL catalytic domain; it reads GDAAELVWLL…AFTEIFGATV (185 aa). Substrate contacts are provided by residues 92–99, 167–169, and 180–182; these read RGGQLTYH, AIG, and GIA. The active-site Acyl-thioester intermediate is the Cys-198.

This sequence belongs to the LipB family.

It is found in the cytoplasm. The catalysed reaction is octanoyl-[ACP] + L-lysyl-[protein] = N(6)-octanoyl-L-lysyl-[protein] + holo-[ACP] + H(+). It participates in protein modification; protein lipoylation via endogenous pathway; protein N(6)-(lipoyl)lysine from octanoyl-[acyl-carrier-protein]: step 1/2. Catalyzes the transfer of endogenously produced octanoic acid from octanoyl-acyl-carrier-protein onto the lipoyl domains of lipoate-dependent enzymes. Lipoyl-ACP can also act as a substrate although octanoyl-ACP is likely to be the physiological substrate. The sequence is that of Octanoyltransferase from Rhodopseudomonas palustris (strain HaA2).